A 30-amino-acid chain; its full sequence is MPLNIQNIIIIINSSLIIILFSSIFFFQLT.

A helical membrane pass occupies residues 7–27 (NIIIIINSSLIIILFSSIFFF).

The protein belongs to the complex I subunit 5 family.

Its subcellular location is the mitochondrion inner membrane. It carries out the reaction a ubiquinone + NADH + 5 H(+)(in) = a ubiquinol + NAD(+) + 4 H(+)(out). Its function is as follows. Core subunit of the mitochondrial membrane respiratory chain NADH dehydrogenase (Complex I) that is believed to belong to the minimal assembly required for catalysis. Complex I functions in the transfer of electrons from NADH to the respiratory chain. The immediate electron acceptor for the enzyme is believed to be ubiquinone. This Pisaster ochraceus (Ochre sea star) protein is NADH-ubiquinone oxidoreductase chain 5 (ND5).